A 366-amino-acid polypeptide reads, in one-letter code: Sperm equatorial segment protein 1 (366 aa).

Positions 1–18 (MKFLVLLVALLLWPSSLP) are cleaved as a signal peptide. Residue asparagine 129 is glycosylated (N-linked (GlcNAc...) asparagine). Residues 139–204 (PFIEKDEPEP…EDVPQLSGDN (66 aa)) are disordered. The span at 144–157 (DEPEPEPEPEPEPE) shows a compositional bias: acidic residues. Polar residues predominate over residues 165-189 (APTQVPSVTEPSQDVTSLSGSTDLG).

The protein belongs to the SPESP1 family. Post-translationally, glycosylated. In testis there are two predominant forms of 77- and 67-kDa and a form of 47-kDa, whereas in epididymal sperm from caput, corpus, and cauda there are two forms of 47- and 43-kDa. Testis forms contain complex carbohydrate residues. Epididymal sperm forms are N-glycosylated. Then undergoes significant glycosylation in the testis and that the majority of these glycoconjugates are removed by the time sperm reach the caput epididymis.

Its subcellular location is the cytoplasmic vesicle. It is found in the secretory vesicle. The protein localises to the acrosome. In terms of biological role, involved in fertilization ability of sperm. The chain is Sperm equatorial segment protein 1 from Bos taurus (Bovine).